Here is a 215-residue protein sequence, read N- to C-terminus: Inositol diphosphatase DSP1 (215 aa).

The 152-residue stretch at 58-209 folds into the Tyrosine-protein phosphatase domain; it reads NFSMVDNGIF…VSSFSHIPMS (152 aa). The WPD loop important for active site topology stretch occupies residues 114–126; that stretch reads FGIEGNKEPFVNI. Residues Asn-125, Ile-126, His-129, and Lys-130 each contribute to the 1D-myo-inositol hexakisphosphate site. The active-site Phosphocysteine intermediate is the Cys-150.

It belongs to the protein-tyrosine phosphatase family. Atypical dual-specificity phosphatase Siw14-like subfamily. As to quaternary structure, homodimer and homohexamer; behaves as a monomer in solution. In terms of tissue distribution, highly expressed in siliques and at lower levels in roots, leaves and flowers.

The catalysed reaction is 5-diphospho-1D-myo-inositol 1,2,3,4,6-pentakisphosphate + H2O = 1D-myo-inositol hexakisphosphate + phosphate + H(+). It carries out the reaction 1,5-bis(diphospho)-1D-myo-inositol 2,3,4,6-tetrakisphosphate + H2O = 1-diphospho-1D-myo-inositol 2,3,4,5,6-pentakisphosphate + phosphate + 2 H(+). It catalyses the reaction 3,5-bis(diphospho)-1D-myo-inositol 1,2,4,6-tetrakisphosphate + H2O = 3-diphospho-1D-myo-inositol 1,2,4,5,6-pentakisphosphate + phosphate + 2 H(+). The enzyme catalyses 6-diphospho-1D-myo-inositol pentakisphosphate + H2O = 1D-myo-inositol hexakisphosphate + phosphate + H(+). The catalysed reaction is 5-diphospho-1D-myo-inositol 1,3,4,6-tetrakisphosphate + H2O = 1D-myo-inositol 1,3,4,5,6-pentakisphosphate + phosphate + H(+). With respect to regulation, inhibited by manganese, calcium and zinc ions but not magnesium ions. Cleaves the beta-phosphate at the 5-position of soluble inositol pyrophosphates. Has highest activity on 5-diphosphoinositol 1,2,3,4,6-pentakisphosphate (5-InsP(7)), 1,5-bis-diphosphoinositol 2,3,4,6-tetrakisphosphate (1,5-InsP(8)) and 3,5-InsP(8), but has weak activity against 1-diphosphoinositol 2,3,4,5,6-pentakisphosphate (1-InsP(7)). Dephosphorylates the phosphoinositides PI(3,4,5)P3, PI(3,5)P2, but not PI(3)P, PI(3,4)P2 or PI(4,5)P2. Possesses phosphotyrosine phosphatase activity in vitro, and can hydrolyze para-nitrophenyl phosphate, O-methylfluorescein phosphate, polyphosphate and ATP. This Arabidopsis thaliana (Mouse-ear cress) protein is Inositol diphosphatase DSP1.